A 79-amino-acid polypeptide reads, in one-letter code: U24-theraphotoxin-Cg1a (79 aa).

Positions 1-19 (MRVLFIIAVLALISVGCYA) are cleaved as a signal peptide. Residues 20–44 (SEMKDRSSRNEVLSAIFAIEEPQER) constitute a propeptide that is removed on maturation. 3 disulfides stabilise this stretch: cysteine 46–cysteine 61, cysteine 53–cysteine 66, and cysteine 60–cysteine 73. Tryptophan 78 bears the Tryptophan amide mark.

The protein belongs to the neurotoxin 10 (Hwtx-1) family. 35 (Jztx-27) subfamily. Expressed by the venom gland.

It is found in the secreted. Its function is as follows. Probable ion channel inhibitor. The sequence is that of U24-theraphotoxin-Cg1a from Chilobrachys guangxiensis (Chinese earth tiger tarantula).